Consider the following 178-residue polypeptide: ATP synthase subunit b (178 aa).

The helical transmembrane segment at 19-39 threads the bilayer; sequence ITGIGFVILLFIAIKYIVPAF.

The protein belongs to the ATPase B chain family. As to quaternary structure, F-type ATPases have 2 components, F(1) - the catalytic core - and F(0) - the membrane proton channel. F(1) has five subunits: alpha(3), beta(3), gamma(1), delta(1), epsilon(1). F(0) has three main subunits: a(1), b(2) and c(10-14). The alpha and beta chains form an alternating ring which encloses part of the gamma chain. F(1) is attached to F(0) by a central stalk formed by the gamma and epsilon chains, while a peripheral stalk is formed by the delta and b chains.

The protein resides in the cell membrane. Functionally, f(1)F(0) ATP synthase produces ATP from ADP in the presence of a proton or sodium gradient. F-type ATPases consist of two structural domains, F(1) containing the extramembraneous catalytic core and F(0) containing the membrane proton channel, linked together by a central stalk and a peripheral stalk. During catalysis, ATP synthesis in the catalytic domain of F(1) is coupled via a rotary mechanism of the central stalk subunits to proton translocation. Component of the F(0) channel, it forms part of the peripheral stalk, linking F(1) to F(0). The chain is ATP synthase subunit b from Kocuria rhizophila (strain ATCC 9341 / DSM 348 / NBRC 103217 / DC2201).